The chain runs to 193 residues: Acyl carrier protein phosphodiesterase (193 aa).

It belongs to the AcpH family.

The catalysed reaction is holo-[ACP] + H2O = apo-[ACP] + (R)-4'-phosphopantetheine + H(+). Converts holo-ACP to apo-ACP by hydrolytic cleavage of the phosphopantetheine prosthetic group from ACP. This Shigella boydii serotype 18 (strain CDC 3083-94 / BS512) protein is Acyl carrier protein phosphodiesterase.